A 515-amino-acid polypeptide reads, in one-letter code: Bifunctional purine biosynthesis protein PurH (515 aa).

The 145-residue stretch at 1–145 (MTKRVLISVS…KNHASVTVVV (145 aa)) folds into the MGS-like domain.

This sequence belongs to the PurH family.

It catalyses the reaction (6R)-10-formyltetrahydrofolate + 5-amino-1-(5-phospho-beta-D-ribosyl)imidazole-4-carboxamide = 5-formamido-1-(5-phospho-D-ribosyl)imidazole-4-carboxamide + (6S)-5,6,7,8-tetrahydrofolate. The catalysed reaction is IMP + H2O = 5-formamido-1-(5-phospho-D-ribosyl)imidazole-4-carboxamide. The protein operates within purine metabolism; IMP biosynthesis via de novo pathway; 5-formamido-1-(5-phospho-D-ribosyl)imidazole-4-carboxamide from 5-amino-1-(5-phospho-D-ribosyl)imidazole-4-carboxamide (10-formyl THF route): step 1/1. It participates in purine metabolism; IMP biosynthesis via de novo pathway; IMP from 5-formamido-1-(5-phospho-D-ribosyl)imidazole-4-carboxamide: step 1/1. This is Bifunctional purine biosynthesis protein PurH from Streptococcus pneumoniae serotype 19F (strain G54).